We begin with the raw amino-acid sequence, 102 residues long: uncharacterized protein (102 aa).

A signal peptide spans Met-1–Ala-22. A lipid anchor (N-palmitoyl cysteine) is attached at Cys-23. The S-diacylglycerol cysteine moiety is linked to residue Cys-23.

This sequence belongs to the MG185/MG260 family.

It is found in the cell membrane. This is an uncharacterized protein from Mycoplasma pneumoniae (strain ATCC 29342 / M129 / Subtype 1) (Mycoplasmoides pneumoniae).